The sequence spans 68 residues: Large ribosomal subunit protein uL29 (68 aa).

It belongs to the universal ribosomal protein uL29 family.

This Streptococcus agalactiae serotype Ia (strain ATCC 27591 / A909 / CDC SS700) protein is Large ribosomal subunit protein uL29.